Reading from the N-terminus, the 445-residue chain is GTPase Der (445 aa).

EngA-type G domains are found at residues 3-167 (PVIA…YAGQ) and 180-353 (IKIA…AAAM). Residues 9 to 16 (GRPNVGKS), 56 to 60 (DTGGF), 119 to 122 (NKAE), 186 to 193 (GRPNVGKS), 233 to 237 (DTAGL), and 298 to 301 (NKWD) each bind GTP. Residues 354–438 (AKLPTPKLTR…PLRIEFRSSN (85 aa)) form the KH-like domain.

This sequence belongs to the TRAFAC class TrmE-Era-EngA-EngB-Septin-like GTPase superfamily. EngA (Der) GTPase family. Associates with the 50S ribosomal subunit.

Its function is as follows. GTPase that plays an essential role in the late steps of ribosome biogenesis. This chain is GTPase Der, found in Burkholderia cenocepacia (strain HI2424).